The following is a 178-amino-acid chain: Adenine phosphoribosyltransferase (178 aa).

It belongs to the purine/pyrimidine phosphoribosyltransferase family. As to quaternary structure, homodimer.

The protein resides in the cytoplasm. It catalyses the reaction AMP + diphosphate = 5-phospho-alpha-D-ribose 1-diphosphate + adenine. The protein operates within purine metabolism; AMP biosynthesis via salvage pathway; AMP from adenine: step 1/1. In terms of biological role, catalyzes a salvage reaction resulting in the formation of AMP, that is energically less costly than de novo synthesis. The protein is Adenine phosphoribosyltransferase of Cereibacter sphaeroides (strain ATCC 17023 / DSM 158 / JCM 6121 / CCUG 31486 / LMG 2827 / NBRC 12203 / NCIMB 8253 / ATH 2.4.1.) (Rhodobacter sphaeroides).